The primary structure comprises 83 residues: Protein ORF5 (83 aa).

Belongs to the microviridae C protein family.

In terms of biological role, plays a central role in the packaging of viral DNA into phage procapsid, which occurs in the late stage of infection. Can interact with the replicative complex after the completion of one round of DNA synthesis. When protein ORF5 is bound to the replicative form, the complex becomes accessible to procapsid and serves as a DNA packaging apparatus. The chain is Protein ORF5 from Spiroplasma melliferum (SpV4).